A 511-amino-acid chain; its full sequence is Histidine ammonia-lyase (511 aa).

Residues 142 to 144 constitute a cross-link (5-imidazolinone (Ala-Gly)); sequence ASG. Serine 143 carries the 2,3-didehydroalanine (Ser) modification.

Belongs to the PAL/histidase family. In terms of processing, contains an active site 4-methylidene-imidazol-5-one (MIO), which is formed autocatalytically by cyclization and dehydration of residues Ala-Ser-Gly.

The protein resides in the cytoplasm. It catalyses the reaction L-histidine = trans-urocanate + NH4(+). It functions in the pathway amino-acid degradation; L-histidine degradation into L-glutamate; N-formimidoyl-L-glutamate from L-histidine: step 1/3. The polypeptide is Histidine ammonia-lyase (Rhizobium rhizogenes (Agrobacterium rhizogenes)).